The following is an 868-amino-acid chain: B-cell receptor CD22 (868 aa).

Residues 1–21 (MRVHYLWLLLILGHVASARYS) form the signal peptide. Positions 22 to 148 (SANDWTVDHP…MEPIHLNVSE (127 aa)) constitute an Ig-like V-type domain. The Extracellular segment spans residues 22-708 (SANDWTVDHP…YYSPETIGKR (687 aa)). 3 disulfides stabilise this stretch: Cys-41/Cys-177, Cys-46/Cys-112, and Cys-171/Cys-235. Residues Asn-111 and Asn-122 are each glycosylated (N-linked (GlcNAc...) asparagine). Arg-130 serves as a coordination point for N-acetylneuraminate. N-linked (GlcNAc...) asparagine glycosylation is found at Asn-145, Asn-174, Asn-271, Asn-281, Asn-384, Asn-414, Asn-466, Asn-567, and Asn-595. Ig-like C2-type domains lie at 153–250 (PYIQ…RTVR), 257–347 (PKLE…VELT), 352–435 (PEPS…AKLD), 440–521 (PKAV…VILN), 526–603 (PRDV…ETLS), and 614–697 (PRRL…STLT). Disulfide bonds link Cys-278/Cys-330, Cys-374/Cys-417, Cys-463/Cys-505, and Cys-550/Cys-592. A disulfide bridge links Cys-637 with Cys-680. A helical transmembrane segment spans residues 709–727 (VALGLGFCLTICILAIWGM). The Cytoplasmic segment spans residues 728 to 868 (KIQKKWKQNR…EDVDYVTLKH (141 aa)). The span at 738–752 (SQQGLQENSSGQSFF) shows a compositional bias: polar residues. A disordered region spans residues 738–772 (SQQGLQENSSGQSFFVRNKKARRTPLSEGPQSQGC). Residues Ser-746, Ser-747, and Ser-750 each carry the phosphoserine modification. Residues 781–786 (VSYAIL) carry the ITIM motif 1 motif. Phosphotyrosine is present on Tyr-783. Residues 790-812 (ESDTHNTGDAGTPATQAPPPNNS) are disordered. A phosphotyrosine mark is found at Tyr-828, Tyr-843, and Tyr-863. 2 consecutive short sequence motifs (ITIM motif) follow at residues 841-846 (IHYSEL) and 861-866 (VDYVTL).

It belongs to the immunoglobulin superfamily. SIGLEC (sialic acid binding Ig-like lectin) family. As to quaternary structure, predominantly monomer of isoform CD22-beta. Also found as heterodimer of isoform CD22-beta and a shorter isoform. Interacts with PTPN6/SHP-1, LYN, SYK, PIK3R1/PIK3R2 and PLCG1 upon phosphorylation. Interacts with GRB2, INPP5D and SHC1 upon phosphorylation. May form a complex with INPP5D/SHIP, GRB2 and SHC1. Phosphorylated on tyrosine residues by LYN. Post-translationally, phosphorylation of Tyr-783 and Tyr-843 are involved in binding to SYK. Phosphorylation of Tyr-828 is involved in binding to GRB2. Phosphorylation of Tyr-863 is involved in binding to SYK, PLCG2 and PIK3R1/PIK3R2. B-lymphocytes.

The protein localises to the cell membrane. Functionally, most highly expressed siglec (sialic acid-binding immunoglobulin-like lectin) on B-cells that plays a role in various aspects of B-cell biology including differentiation, antigen presentation, and trafficking to bone marrow. Binds to alpha 2,6-linked sialic acid residues of surface molecules such as CD22 itself, CD45 and IgM in a cis configuration. Can also bind to ligands on other cells as an adhesion molecule in a trans configuration. Acts as an inhibitory coreceptor on the surface of B-cells and inhibits B-cell receptor induced signaling, characterized by inhibition of the calcium mobilization and cellular activation. Mechanistically, the immunoreceptor tyrosine-based inhibitory motif domain is phosphorylated by the Src kinase LYN, which in turn leads to the recruitment of the protein tyrosine phosphatase 1/PTPN6, leading to the negative regulation of BCR signaling. If this negative signaling from is of sufficient strength, apoptosis of the B-cell can be induced. This is B-cell receptor CD22 from Mus musculus (Mouse).